We begin with the raw amino-acid sequence, 560 residues long: Phenylalanine--tRNA ligase beta subunit (560 aa).

In terms of domain architecture, B5 spans 279-354 (LTPKEFEVDL…IAYGYNNIEP (76 aa)). 4 residues coordinate Mg(2+): aspartate 332, aspartate 338, glutamate 341, and aspartate 342.

This sequence belongs to the phenylalanyl-tRNA synthetase beta subunit family. Type 2 subfamily. As to quaternary structure, tetramer of two alpha and two beta subunits. It depends on Mg(2+) as a cofactor.

Its subcellular location is the cytoplasm. It carries out the reaction tRNA(Phe) + L-phenylalanine + ATP = L-phenylalanyl-tRNA(Phe) + AMP + diphosphate + H(+). The chain is Phenylalanine--tRNA ligase beta subunit from Thermococcus sibiricus (strain DSM 12597 / MM 739).